The primary structure comprises 60 residues: Large ribosomal subunit protein bL32 (60 aa).

The span at Met1–Arg16 shows a compositional bias: basic residues. A disordered region spans residues Met1–Gly34.

This sequence belongs to the bacterial ribosomal protein bL32 family.

This chain is Large ribosomal subunit protein bL32, found in Maricaulis maris (strain MCS10) (Caulobacter maris).